Reading from the N-terminus, the 489-residue chain is Glycogen synthase (489 aa).

An ADP-alpha-D-glucose-binding site is contributed by R20.

The protein belongs to the glycosyltransferase 1 family. Bacterial/plant glycogen synthase subfamily.

The catalysed reaction is [(1-&gt;4)-alpha-D-glucosyl](n) + ADP-alpha-D-glucose = [(1-&gt;4)-alpha-D-glucosyl](n+1) + ADP + H(+). It participates in glycan biosynthesis; glycogen biosynthesis. In terms of biological role, synthesizes alpha-1,4-glucan chains using ADP-glucose. This chain is Glycogen synthase, found in Chlorobium luteolum (strain DSM 273 / BCRC 81028 / 2530) (Pelodictyon luteolum).